A 333-amino-acid chain; its full sequence is Quinolinate synthase (333 aa).

2 residues coordinate iminosuccinate: His41 and Ser58. Cys103 provides a ligand contact to [4Fe-4S] cluster. Residues 129-131 (YIN) and Ser146 each bind iminosuccinate. Cys189 serves as a coordination point for [4Fe-4S] cluster. Iminosuccinate-binding positions include 215–217 (HPE) and Thr232. Cys282 serves as a coordination point for [4Fe-4S] cluster.

The protein belongs to the quinolinate synthase family. Type 2 subfamily. [4Fe-4S] cluster serves as cofactor.

It localises to the cytoplasm. The catalysed reaction is iminosuccinate + dihydroxyacetone phosphate = quinolinate + phosphate + 2 H2O + H(+). It participates in cofactor biosynthesis; NAD(+) biosynthesis; quinolinate from iminoaspartate: step 1/1. In terms of biological role, catalyzes the condensation of iminoaspartate with dihydroxyacetone phosphate to form quinolinate. The sequence is that of Quinolinate synthase from Prochlorococcus marinus (strain MIT 9303).